The following is a 254-amino-acid chain: tRNA (guanine-N(1)-)-methyltransferase (254 aa).

Residues glycine 115 and 135 to 140 (VGDFVL) contribute to the S-adenosyl-L-methionine site.

Belongs to the RNA methyltransferase TrmD family. Homodimer.

It localises to the cytoplasm. The catalysed reaction is guanosine(37) in tRNA + S-adenosyl-L-methionine = N(1)-methylguanosine(37) in tRNA + S-adenosyl-L-homocysteine + H(+). In terms of biological role, specifically methylates guanosine-37 in various tRNAs. The protein is tRNA (guanine-N(1)-)-methyltransferase of Francisella tularensis subsp. tularensis (strain FSC 198).